We begin with the raw amino-acid sequence, 316 residues long: Ribosomal RNA small subunit methyltransferase H (316 aa).

Residues 35 to 37 (GGH), aspartate 55, phenylalanine 79, aspartate 101, and glutamine 108 contribute to the S-adenosyl-L-methionine site. The disordered stretch occupies residues 291–316 (ALKPSDQEVELNPRSRSSVLRVAEKL).

This sequence belongs to the methyltransferase superfamily. RsmH family.

Its subcellular location is the cytoplasm. The enzyme catalyses cytidine(1402) in 16S rRNA + S-adenosyl-L-methionine = N(4)-methylcytidine(1402) in 16S rRNA + S-adenosyl-L-homocysteine + H(+). Functionally, specifically methylates the N4 position of cytidine in position 1402 (C1402) of 16S rRNA. The chain is Ribosomal RNA small subunit methyltransferase H from Vibrio cholerae serotype O1 (strain ATCC 39315 / El Tor Inaba N16961).